A 103-amino-acid polypeptide reads, in one-letter code: Toluene-4-monooxygenase system, effector component (103 aa).

The protein belongs to the TmoD/XamoD family. As to quaternary structure, the alkene monooxygenase multicomponent enzyme system is composed of an electron transfer component and a monooxygenase component interacting with the effector protein TmoD. The electron transfer component is composed of a ferredoxin reductase (TmoF) and a ferredoxin (TmoC), and the monooxygenase component is formed by a heterohexamer (dimer of heterotrimers) of two alpha subunits (TmoA), two beta subunits (TmoE) and two gamma subunits (TmoB).

Its pathway is xenobiotic degradation; toluene degradation. In terms of biological role, effector component of the toluene-4-monooxygenase multicomponent enzyme system which catalyzes the O2- and NADH-dependent hydroxylation of toluene to form p-cresol. Required for optimal efficiency and specificity of the holoenzyme. The protein is Toluene-4-monooxygenase system, effector component of Ectopseudomonas mendocina (Pseudomonas mendocina).